Consider the following 503-residue polypeptide: Maturase K (503 aa).

This sequence belongs to the intron maturase 2 family. MatK subfamily.

It localises to the plastid. Its subcellular location is the chloroplast. In terms of biological role, usually encoded in the trnK tRNA gene intron. Probably assists in splicing its own and other chloroplast group II introns. The chain is Maturase K from Rubus ursinus (California blackberry).